Consider the following 158-residue polypeptide: Phosphopantetheine adenylyltransferase (158 aa).

The protein belongs to the eukaryotic CoaD family.

The protein resides in the cytoplasm. It carries out the reaction (R)-4'-phosphopantetheine + ATP + H(+) = 3'-dephospho-CoA + diphosphate. Its pathway is cofactor biosynthesis; coenzyme A biosynthesis. Its function is as follows. Reversibly transfers an adenylyl group from ATP to 4'-phosphopantetheine, yielding dephospho-CoA (dPCoA) and pyrophosphate. The polypeptide is Phosphopantetheine adenylyltransferase (Pyrococcus horikoshii (strain ATCC 700860 / DSM 12428 / JCM 9974 / NBRC 100139 / OT-3)).